Reading from the N-terminus, the 858-residue chain is DNA mismatch repair protein MutS (858 aa).

ATP is bound at residue 600-607 (GPNMSGKS). The segment at 803-823 (EAASDEVDDNNSENSPMTDAE) is disordered.

Belongs to the DNA mismatch repair MutS family.

In terms of biological role, this protein is involved in the repair of mismatches in DNA. It is possible that it carries out the mismatch recognition step. This protein has a weak ATPase activity. In Lactobacillus helveticus (strain DPC 4571), this protein is DNA mismatch repair protein MutS.